A 426-amino-acid polypeptide reads, in one-letter code: Probable histidine--tRNA ligase (426 aa).

Belongs to the class-II aminoacyl-tRNA synthetase family. As to quaternary structure, homodimer.

It is found in the cytoplasm. It catalyses the reaction tRNA(His) + L-histidine + ATP = L-histidyl-tRNA(His) + AMP + diphosphate + H(+). The polypeptide is Probable histidine--tRNA ligase (hisS) (Tropheryma whipplei (strain TW08/27) (Whipple's bacillus)).